An 84-amino-acid chain; its full sequence is MVCLPCIFLPIMMAIYMKFIMPYVYRVLPQRWVNFLDPILYPTCPVKIPEPENKKEVEEEKKDAPCCANTTEATVETVETKKDQ.

Residues 1 to 21 form a helical membrane-spanning segment; sequence MVCLPCIFLPIMMAIYMKFIM.

It belongs to the UPF0729 family.

The protein resides in the cell membrane. The chain is UPF0729 protein F18A11.3 from Caenorhabditis elegans.